Here is a 406-residue protein sequence, read N- to C-terminus: Tryptophan 2,3-dioxygenase (406 aa).

Ser-19 bears the Phosphoserine mark. Residues 72–76 (FIITH) and Arg-144 contribute to the substrate site. Residue His-328 participates in heme binding. Thr-342 contacts substrate.

It belongs to the tryptophan 2,3-dioxygenase family. In terms of assembly, homotetramer. Dimer of dimers. The cofactor is heme.

The enzyme catalyses L-tryptophan + O2 = N-formyl-L-kynurenine. The protein operates within amino-acid degradation; L-tryptophan degradation via kynurenine pathway; L-kynurenine from L-tryptophan: step 1/2. Functionally, heme-dependent dioxygenase that catalyzes the oxidative cleavage of the L-tryptophan (L-Trp) pyrrole ring and converts L-tryptophan to N-formyl-L-kynurenine. Catalyzes the oxidative cleavage of the indole moiety. The chain is Tryptophan 2,3-dioxygenase from Mus musculus (Mouse).